A 1074-amino-acid polypeptide reads, in one-letter code: Transmembrane protein 132E (1074 aa).

Positions Met-1 to Ala-23 are cleaved as a signal peptide. Over Arg-26–Ala-894 the chain is Extracellular. N-linked (GlcNAc...) asparagine glycosylation is found at Asn-70 and Asn-91. Disordered regions lie at residues Pro-205–Ala-224 and Gly-243–Thr-266. Over residues Ser-247–Ala-262 the composition is skewed to low complexity. Residues Asn-320 and Asn-401 are each glycosylated (N-linked (GlcNAc...) asparagine). Disordered regions lie at residues Arg-564–Gly-587 and Gly-816–Pro-867. The segment covering Gly-843 to Gly-854 has biased composition (low complexity). Residues Leu-895–Leu-915 traverse the membrane as a helical segment. Topologically, residues Arg-916–Ala-1074 are cytoplasmic. The segment at Val-962–His-1064 is disordered. 2 stretches are compositionally biased toward low complexity: residues Ser-973–His-985 and Phe-1016–Glu-1026. A compositionally biased stretch (acidic residues) spans Gly-1035–Leu-1044.

The protein belongs to the TMEM132 family. In terms of tissue distribution, widely expressed, with highest levels in the cochlea. In the cochlea, detected in spiral ganglion, the organ of Corti and stria vascularis. In the organ of Corti, prominently expressed in the outer and inner hair cells, especially at the apical and basal region of the outer hair cell body (at protein level).

Its subcellular location is the membrane. Functionally, required for normal inner ear hair cell function and hearing. This chain is Transmembrane protein 132E (Tmem132e), found in Mus musculus (Mouse).